We begin with the raw amino-acid sequence, 308 residues long: Aspartate carbamoyltransferase catalytic subunit (308 aa).

Residues R49 and T50 each coordinate carbamoyl phosphate. L-aspartate is bound at residue K77. The carbamoyl phosphate site is built by R99, H127, and Q130. R160 and R211 together coordinate L-aspartate. Carbamoyl phosphate contacts are provided by A252 and P253.

Belongs to the aspartate/ornithine carbamoyltransferase superfamily. ATCase family. In terms of assembly, heterododecamer (2C3:3R2) of six catalytic PyrB chains organized as two trimers (C3), and six regulatory PyrI chains organized as three dimers (R2).

It carries out the reaction carbamoyl phosphate + L-aspartate = N-carbamoyl-L-aspartate + phosphate + H(+). The protein operates within pyrimidine metabolism; UMP biosynthesis via de novo pathway; (S)-dihydroorotate from bicarbonate: step 2/3. In terms of biological role, catalyzes the condensation of carbamoyl phosphate and aspartate to form carbamoyl aspartate and inorganic phosphate, the committed step in the de novo pyrimidine nucleotide biosynthesis pathway. This is Aspartate carbamoyltransferase catalytic subunit from Bacillus caldolyticus.